Here is a 151-residue protein sequence, read N- to C-terminus: MYPAHLLVLLAVCVSLLGAASIPARPLNLYQFGNMIQCANHGRRPTRHYMDYGCYCGKGGSGTPVDELDRCCQTHDDCYGEAEKLPACNYMMSGPYYNTYSYECNDGELTCKDNNDECKAFICNCDRTAAICFARTPYNDANWNIDTKTRC.

Positions 1-27 are cleaved as a signal peptide; sequence MYPAHLLVLLAVCVSLLGAASIPARPL. Cystine bridges form between cysteine 38/cysteine 104, cysteine 54/cysteine 151, cysteine 56/cysteine 72, cysteine 71/cysteine 132, cysteine 78/cysteine 125, cysteine 88/cysteine 118, and cysteine 111/cysteine 123. Ca(2+)-binding residues include tyrosine 55, glycine 57, and glycine 59. Residue histidine 75 is part of the active site. Aspartate 76 contacts Ca(2+). Residue aspartate 126 is part of the active site.

This sequence belongs to the phospholipase A2 family. Group I subfamily. D49 sub-subfamily. The cofactor is Ca(2+). In terms of tissue distribution, expressed by the venom gland.

It localises to the secreted. The catalysed reaction is a 1,2-diacyl-sn-glycero-3-phosphocholine + H2O = a 1-acyl-sn-glycero-3-phosphocholine + a fatty acid + H(+). Its function is as follows. PLA2 catalyzes the calcium-dependent hydrolysis of the 2-acyl groups in 3-sn-phosphoglycerides. This is Acidic phospholipase A2 1 from Tropidechis carinatus (Australian rough-scaled snake).